The following is a 348-amino-acid chain: Dihydroorotase (348 aa).

2 residues coordinate Zn(2+): His14 and His16. Substrate contacts are provided by residues 16 to 18 and Asn42; that span reads HLR. The Zn(2+) site is built by Lys100, His137, and His175. Position 100 is an N6-carboxylysine (Lys100). Residue His137 participates in substrate binding. Residue Leu220 participates in substrate binding. Asp248 provides a ligand contact to Zn(2+). Asp248 is a catalytic residue. Residues His252 and Ala264 each contribute to the substrate site.

It belongs to the metallo-dependent hydrolases superfamily. DHOase family. Class II DHOase subfamily. In terms of assembly, homodimer. Zn(2+) serves as cofactor.

It carries out the reaction (S)-dihydroorotate + H2O = N-carbamoyl-L-aspartate + H(+). The protein operates within pyrimidine metabolism; UMP biosynthesis via de novo pathway; (S)-dihydroorotate from bicarbonate: step 3/3. In terms of biological role, catalyzes the reversible cyclization of carbamoyl aspartate to dihydroorotate. This is Dihydroorotase from Ectopseudomonas mendocina (strain ymp) (Pseudomonas mendocina).